The chain runs to 91 residues: DNA-directed RNA polymerase subunit omega (91 aa).

This sequence belongs to the RNA polymerase subunit omega family. As to quaternary structure, the RNAP catalytic core consists of 2 alpha, 1 beta, 1 beta' and 1 omega subunit. When a sigma factor is associated with the core the holoenzyme is formed, which can initiate transcription.

The catalysed reaction is RNA(n) + a ribonucleoside 5'-triphosphate = RNA(n+1) + diphosphate. In terms of biological role, promotes RNA polymerase assembly. Latches the N- and C-terminal regions of the beta' subunit thereby facilitating its interaction with the beta and alpha subunits. The sequence is that of DNA-directed RNA polymerase subunit omega from Pseudoalteromonas translucida (strain TAC 125).